Reading from the N-terminus, the 175-residue chain is Austinoid biosynthesis cluster protein F (175 aa).

This sequence belongs to the trt14 isomerase family. As to quaternary structure, homodimer.

It participates in secondary metabolite biosynthesis; terpenoid biosynthesis. Functionally, part of the gene cluster that mediates the biosynthesis of calidodehydroaustin, a fungal meroterpenoid. The first step of the pathway is the synthesis of 3,5-dimethylorsellinic acid by the polyketide synthase ausA. 3,5-dimethylorsellinic acid is then prenylated by the polyprenyl transferase ausN. Further epoxidation by the FAD-dependent monooxygenase ausM and cyclization by the probable terpene cyclase ausL lead to the formation of protoaustinoid A. Protoaustinoid A is then oxidized to spiro-lactone preaustinoid A3 by the combined action of the FAD-binding monooxygenases ausB and ausC, and the dioxygenase ausE. Acid-catalyzed keto-rearrangement and ring contraction of the tetraketide portion of preaustinoid A3 by ausJ lead to the formation of preaustinoid A4. The aldo-keto reductase ausK, with the help of ausH, is involved in the next step by transforming preaustinoid A4 into isoaustinone which is in turn hydroxylated by the P450 monooxygenase ausI to form austinolide. The cytochrome P450 monooxygenase ausG modifies austinolide to austinol. Austinol is further acetylated to austin by the O-acetyltransferase ausP, which spontaneously changes to dehydroaustin. The cytochrome P450 monooxygenase ausR then converts dehydroaustin is into 7-dehydrodehydroaustin. The hydroxylation catalyzed by ausR permits the O-acetyltransferase ausQ to add an additional acetyl group to the molecule, leading to the formation of acetoxydehydroaustin. The short chain dehydrogenase ausT catalyzes the reduction of the double bond present between carbon atoms 1 and 2 to convert 7-dehydrodehydroaustin into 1,2-dihydro-7-hydroxydehydroaustin. AusQ catalyzes not only an acetylation reaction but also the addition of the PKS ausV diketide product to 1,2-dihydro-7-hydroxydehydroaustin, forming precalidodehydroaustin. Finally, the iron/alpha-ketoglutarate-dependent dioxygenase converts precalidodehydroaustin into calidodehydroaustin. The sequence is that of Austinoid biosynthesis cluster protein F from Aspergillus calidoustus.